Consider the following 331-residue polypeptide: Glutaminase (331 aa).

Residues serine 77, asparagine 129, glutamate 173, asparagine 180, tyrosine 204, tyrosine 256, and valine 274 each coordinate substrate.

Belongs to the glutaminase family. In terms of assembly, homotetramer.

It carries out the reaction L-glutamine + H2O = L-glutamate + NH4(+). This is Glutaminase from Oceanobacillus iheyensis (strain DSM 14371 / CIP 107618 / JCM 11309 / KCTC 3954 / HTE831).